Consider the following 378-residue polypeptide: Quinolinate synthase (378 aa).

Residues H59 and S80 each contribute to the iminosuccinate site. C125 is a [4Fe-4S] cluster binding site. Iminosuccinate contacts are provided by residues 151–153 (YAN) and S168. C212 is a binding site for [4Fe-4S] cluster. Iminosuccinate-binding positions include 238–240 (HPE) and T255. C309 contacts [4Fe-4S] cluster.

Belongs to the quinolinate synthase family. Type 1 subfamily. Requires [4Fe-4S] cluster as cofactor.

It is found in the cytoplasm. The catalysed reaction is iminosuccinate + dihydroxyacetone phosphate = quinolinate + phosphate + 2 H2O + H(+). It participates in cofactor biosynthesis; NAD(+) biosynthesis; quinolinate from iminoaspartate: step 1/1. Catalyzes the condensation of iminoaspartate with dihydroxyacetone phosphate to form quinolinate. In Burkholderia pseudomallei (strain 668), this protein is Quinolinate synthase.